A 262-amino-acid chain; its full sequence is Triosephosphate isomerase (262 aa).

9 to 11 (NWK) provides a ligand contact to substrate. His99 functions as the Electrophile in the catalytic mechanism. Glu171 serves as the catalytic Proton acceptor. The substrate site is built by Gly177 and Ser216.

It belongs to the triosephosphate isomerase family. As to quaternary structure, homodimer.

It localises to the cytoplasm. It carries out the reaction D-glyceraldehyde 3-phosphate = dihydroxyacetone phosphate. It functions in the pathway carbohydrate biosynthesis; gluconeogenesis. It participates in carbohydrate degradation; glycolysis; D-glyceraldehyde 3-phosphate from glycerone phosphate: step 1/1. Involved in the gluconeogenesis. Catalyzes stereospecifically the conversion of dihydroxyacetone phosphate (DHAP) to D-glyceraldehyde-3-phosphate (G3P). This Blochmanniella floridana protein is Triosephosphate isomerase.